We begin with the raw amino-acid sequence, 163 residues long: MLVFGLDPGLNYTGWAVVLKEPSGSLSLLDTGTICTTSCSDLNDKLFCIFSGLSAIIQKFSVSVASIENVFVNLNPKASMFLCYARAASLLACLSSNVKIFEYSPTKIKKCVFGNGRASKEQIAFVVRSSLGLSEDASFSSHASDAIAAALCHIFSSGNRYGI.

Catalysis depends on residues aspartate 7, glutamate 68, and histidine 142. Aspartate 7, glutamate 68, and histidine 142 together coordinate Mg(2+).

It belongs to the RuvC family. In terms of assembly, homodimer which binds Holliday junction (HJ) DNA. The HJ becomes 2-fold symmetrical on binding to RuvC with unstacked arms; it has a different conformation from HJ DNA in complex with RuvA. In the full resolvosome a probable DNA-RuvA(4)-RuvB(12)-RuvC(2) complex forms which resolves the HJ. Mg(2+) serves as cofactor.

Its subcellular location is the cytoplasm. It catalyses the reaction Endonucleolytic cleavage at a junction such as a reciprocal single-stranded crossover between two homologous DNA duplexes (Holliday junction).. Functionally, the RuvA-RuvB-RuvC complex processes Holliday junction (HJ) DNA during genetic recombination and DNA repair. Endonuclease that resolves HJ intermediates. Cleaves cruciform DNA by making single-stranded nicks across the HJ at symmetrical positions within the homologous arms, yielding a 5'-phosphate and a 3'-hydroxyl group; requires a central core of homology in the junction. The consensus cleavage sequence is 5'-(A/T)TT(C/G)-3'. Cleavage occurs on the 3'-side of the TT dinucleotide at the point of strand exchange. HJ branch migration catalyzed by RuvA-RuvB allows RuvC to scan DNA until it finds its consensus sequence, where it cleaves and resolves the cruciform DNA. This Anaplasma phagocytophilum (strain HZ) protein is Crossover junction endodeoxyribonuclease RuvC.